We begin with the raw amino-acid sequence, 377 residues long: 5-hydroxytryptamine receptor 1D (377 aa).

Residues 1–23 (MSPLNQSAEGLPQEASNRSLNAT) are disordered. The Extracellular portion of the chain corresponds to 1 to 38 (MSPLNQSAEGLPQEASNRSLNATETSEAWDPRTLQALK). 3 N-linked (GlcNAc...) asparagine glycosylation sites follow: N5, N17, and N21. A helical membrane pass occupies residues 39-64 (ISLAVVLSVITLATVLSNAFVLTTIL). The Cytoplasmic segment spans residues 65-75 (LTRKLHTPANY). A helical transmembrane segment spans residues 76-97 (LIGSLATTDLLVSILVMPISIA). Residues 98-109 (YTITHTWNFGQI) are Extracellular-facing. Residues 110 to 134 (LCDIWLSSDITCCTASILHLCVIAL) form a helical membrane-spanning segment. A disulfide bridge connects residues C111 and C188. The serotonin site is built by D118 and C122. Positions 135 to 137 (DRY) match the DRY motif; important for ligand-induced conformation changes motif. The Cytoplasmic segment spans residues 135–154 (DRYWAITDALEYSKRRTAGH). The helical transmembrane segment at 155–176 (AATMIAIVWAISICISIPPLFW) threads the bilayer. At 177 to 194 (RQAKAQEEMSDCLVNTSQ) the chain is on the extracellular side. A helical membrane pass occupies residues 195–218 (ISYTIYSTCGAFYIPSVLLIILYG). At 219-300 (RIYRAARNRI…ISAARERKAT (82 aa)) the chain is on the cytoplasmic side. A helical transmembrane segment spans residues 301–326 (KILGIILGAFIICWLPFFVVSLVLPI). Position 321 (S321) interacts with serotonin. Residues 327–335 (CRDSCWIHP) are Extracellular-facing. A helical transmembrane segment spans residues 336–359 (ALFDFFTWLGYLNSLINPIIYTVF). An NPxxY motif; important for ligand-induced conformation changes and signaling motif is present at residues 352–356 (NPIIY). Residues 360–377 (NEEFRQAFQKIVPFRKAS) lie on the Cytoplasmic side of the membrane.

The protein belongs to the G-protein coupled receptor 1 family. Homodimer. Heterodimer with HTR1B. Detected in brain neocortex and caudate nucleus (at protein level).

The protein resides in the cell membrane. In terms of biological role, G-protein coupled receptor for 5-hydroxytryptamine (serotonin). Also functions as a receptor for ergot alkaloid derivatives, various anxiolytic and antidepressant drugs and other psychoactive substances. Ligand binding causes a conformation change that triggers signaling via guanine nucleotide-binding proteins (G proteins) and modulates the activity of downstream effectors, such as adenylate cyclase. HTR1D is coupled to G(i)/G(o) G alpha proteins and mediates inhibitory neurotransmission by inhibiting adenylate cyclase activity. Regulates the release of 5-hydroxytryptamine in the brain, and thereby affects neural activity. May also play a role in regulating the release of other neurotransmitters. May play a role in vasoconstriction. This is 5-hydroxytryptamine receptor 1D from Homo sapiens (Human).